A 312-amino-acid polypeptide reads, in one-letter code: Serine/threonine-protein phosphatase PP1 isozyme 2 (312 aa).

Ala2 bears the N-acetylalanine mark. Asp70, His72, Asp98, and Asn130 together coordinate Mn(2+). His131 serves as the catalytic Proton donor. 2 residues coordinate Mn(2+): His179 and His254.

It belongs to the PPP phosphatase family. PP-1 subfamily. Interacts with SRK2D/SNRK2.2 and SRK2E/SNRK2.6. Requires Mn(2+) as cofactor.

It is found in the nucleus. The protein localises to the cytoplasm. The catalysed reaction is O-phospho-L-seryl-[protein] + H2O = L-seryl-[protein] + phosphate. The enzyme catalyses O-phospho-L-threonyl-[protein] + H2O = L-threonyl-[protein] + phosphate. With respect to regulation, phosphatase activity is strongly reduced by the protein phosphatase inhibitor 2 (I-2). Functionally, serine/threonine-protein phosphatase that possesses phosphatase activity toward para-nitrophenyl phosphate (pNPP) in vitro. This Arabidopsis thaliana (Mouse-ear cress) protein is Serine/threonine-protein phosphatase PP1 isozyme 2.